Reading from the N-terminus, the 255-residue chain is Ribonuclease HII (255 aa).

The region spanning 72–255 (AIICGIDEVG…KSFEPIKSLL (184 aa)) is the RNase H type-2 domain. Residues Asp-78, Glu-79, and Asp-170 each contribute to the a divalent metal cation site.

The protein belongs to the RNase HII family. Mn(2+) serves as cofactor. Requires Mg(2+) as cofactor.

It localises to the cytoplasm. The catalysed reaction is Endonucleolytic cleavage to 5'-phosphomonoester.. Endonuclease that specifically degrades the RNA of RNA-DNA hybrids. The sequence is that of Ribonuclease HII from Staphylococcus aureus (strain Mu3 / ATCC 700698).